Here is an 85-residue protein sequence, read N- to C-terminus: Toxin To9 (85 aa).

A signal peptide spans 1-19 (MNYSTLIAVASLLTAGTES). Residues 21–81 (KDGYPVKEGD…AAIKGYGRCR (61 aa)) enclose the LCN-type CS-alpha/beta domain. 4 cysteine pairs are disulfide-bonded: Cys31–Cys80, Cys35–Cys56, Cys42–Cys63, and Cys46–Cys65. The residue at position 82 (Pro82) is a Proline amide.

It belongs to the long (4 C-C) scorpion toxin superfamily. Sodium channel inhibitor family. Alpha subfamily. Expressed by the venom gland.

The protein resides in the secreted. Its function is as follows. Alpha toxins bind voltage-independently at site-3 of sodium channels (Nav) and inhibit the inactivation of the activated channels, thereby blocking neuronal transmission. In Tityus obscurus (Amazonian scorpion), this protein is Toxin To9.